A 251-amino-acid chain; its full sequence is HTH-type transcriptional regulator UlaR (251 aa).

The 56-residue stretch at 3–58 (EAQRHQILLDMLAQLGFVTVENVIERLGISPATARRDINKLDESGKLKKVRNGAEA) folds into the HTH deoR-type domain. Residues 20–39 (VTVENVIERLGISPATARRD) constitute a DNA-binding region (H-T-H motif).

The protein resides in the cytoplasm. Functionally, represses ulaG and the ulaABCDEF operon. This Salmonella arizonae (strain ATCC BAA-731 / CDC346-86 / RSK2980) protein is HTH-type transcriptional regulator UlaR.